Reading from the N-terminus, the 642-residue chain is Mini-chromosome maintenance complex-binding protein (642 aa).

The span at 151 to 161 shows a compositional bias: polar residues; the sequence is ARVSPSTSYTP. The interval 151–200 is disordered; sequence ARVSPSTSYTPSRHKRSYEDDEDMDLQPNKQKDQHSGARQAGGLGGLHWR. Residue Ser-154 is modified to Phosphoserine. Thr-160 bears the Phosphothreonine mark. 2 positions are modified to phosphoserine: Ser-167 and Ser-298.

This sequence belongs to the MCMBP family. As to quaternary structure, interacts with the MCM complex: associates with the MCM3-7 complex which lacks MCM2, while it does not interact with the MCM complex when MCM2 is present (MCM2-7 complex). Interacts with the RPA complex, when composed of all RPA1, RPA2 and RPA3 components, but not with RPA1 or RPA2 alone.

The protein localises to the nucleus. Associated component of the MCM complex that acts as a regulator of DNA replication. Binds to the MCM complex during late S phase and promotes the disassembly of the MCM complex from chromatin, thereby acting as a key regulator of pre-replication complex (pre-RC) unloading from replicated DNA. Can dissociate the MCM complex without addition of ATP; probably acts by destabilizing interactions of each individual subunits of the MCM complex. Required for sister chromatid cohesion. This Rattus norvegicus (Rat) protein is Mini-chromosome maintenance complex-binding protein (Mcmbp).